A 748-amino-acid polypeptide reads, in one-letter code: MGLRTAKKRGLGGGGKWKREEGGGTRGRREVRPACFLQSGGRGDPGDVGGPAGNPGCSPHPRAATRPPPLPAHTPAHTPEWCGAASAEAAEPRRAGPHLCIPAPGLTKTPILEKVPRKMAAKTPSSEESGLPKLPVPPLQQTLATYLQCMRHLVSEEQFRKSQAIVQQFGAPGGLGETLQQKLLERQEKTANWVSEYWLNDMYLNNRLALPVNSSPAVIFARQHFPGTDDQLRFAASLISGVLSYKALLDSHSIPTDCAKGQLSGQPLCMKQYYGLFSSYRLPGHTQDTLVAQNSSIMPEPEHVIVACCNQFFVLDVVINFRRLSEGDLFTQLRKIVKMASNEDERLPPIGLLTSDGRSEWAEARTVLVKDSTNRDSLDMIERCICLVCLDAPGGVELSDTHRALQLLHGGGYSKNGANRWYDKSLQFVVGRDGTCGVVCEHSPFDGIVLVQCTEHLLKHVTQSSRKLIRADSVSELPAPRRLRWKCSPEIQGHLASSAEKLQRIVKNLDFIVYKFDNYGKTFIKKQKCSPDAFIQVALQLAFYRLHRRLVPTYESASIRRFQEGRVDNIRSATPEALAFVRAVTDHKAAVPASEKLLLLKDAIRAQTAYTVMAITGMAIDNHLLALRELARAMCKELPEMFMDETYLMSNRFVLSTSQVPTTTEMFCCYGPVVPNGYGACYNPQPETILFCISSFHSCKETSSSKFAKAVEESLIDMRDLCSLLPPTESKPLATKEKATRPSQGHQP.

Over residues 1-10 (MGLRTAKKRG) the composition is skewed to basic residues. Positions 1-89 (MGLRTAKKRG…EWCGAASAEA (89 aa)) are disordered. Over residues 17-32 (WKREEGGGTRGRREVR) the composition is skewed to basic and acidic residues. A compositionally biased stretch (gly residues) spans 40-53 (GGRGDPGDVGGPAG). 2 stretches are compositionally biased toward low complexity: residues 54–65 (NPGCSPHPRAAT) and 73–89 (HTPAHTPEWCGAASAEA). Serine 125 is modified (phosphoserine). Histidine 442 serves as the catalytic Proton acceptor. Residue serine 473 is modified to Phosphoserine. CoA contacts are provided by residues 520 to 532 (GKTFIKKQKCSPD), serine 558, and glutamine 659. Residues 727-748 (PTESKPLATKEKATRPSQGHQP) form a disordered region.

It belongs to the carnitine/choline acetyltransferase family.

It catalyses the reaction choline + acetyl-CoA = acetylcholine + CoA. In terms of biological role, catalyzes the reversible synthesis of acetylcholine (ACh) from acetyl CoA and choline at cholinergic synapses. The protein is Choline O-acetyltransferase (CHAT) of Homo sapiens (Human).